A 660-amino-acid chain; its full sequence is Cysteine--tRNA ligase, cytoplasmic (660 aa).

The span at 1-10 (MSENSSPKLE) shows a compositional bias: polar residues. Residues 1–20 (MSENSSPKLESTSAAAASTK) are disordered. Position 65 (C65) interacts with Zn(2+). The short motif at 67-77 (PTVYDASHMGH) is the 'HIGH' region element. Residues C256, H281, and E285 each coordinate Zn(2+). Positions 314–318 (KMSKS) match the 'KMSKS' region motif. An ATP-binding site is contributed by K317. 2 disordered regions span residues 563 to 584 (IEKKKQADKEEKEKKLKEKFEK) and 627 to 660 (QKEYDNQTKEHNNYLKSLSTSTSSPTLTSTQSPQ). A compositionally biased stretch (basic and acidic residues) spans 627–639 (QKEYDNQTKEHNN). The span at 643–660 (SLSTSTSSPTLTSTQSPQ) shows a compositional bias: low complexity.

It belongs to the class-I aminoacyl-tRNA synthetase family. Requires Zn(2+) as cofactor.

Its subcellular location is the cytoplasm. The catalysed reaction is tRNA(Cys) + L-cysteine + ATP = L-cysteinyl-tRNA(Cys) + AMP + diphosphate. The sequence is that of Cysteine--tRNA ligase, cytoplasmic (cysS) from Dictyostelium discoideum (Social amoeba).